Reading from the N-terminus, the 165-residue chain is Type VI lipase immunity protein Tli3 (165 aa).

The signal sequence occupies residues 1–21; the sequence is MKCKTLLIACLFGLGSAQALA.

Interacts with the Tle3 toxin.

The protein localises to the periplasm. Its function is as follows. Immunity protein that neutralizes the toxicity of the P.aeruginosa antibacterial toxin Tle3 in the periplasm to protect the cell from fratricide intoxication. This is Type VI lipase immunity protein Tli3 from Pseudomonas aeruginosa (strain ATCC 15692 / DSM 22644 / CIP 104116 / JCM 14847 / LMG 12228 / 1C / PRS 101 / PAO1).